A 196-amino-acid polypeptide reads, in one-letter code: Secreted effector protein SseB (196 aa).

It belongs to the EspA/SseB family. May form a complex with SseC and SseD. Binds to the chaperone SseA.

It localises to the secreted. Its subcellular location is the cell surface. Effector proteins function to alter host cell physiology and promote bacterial survival in host tissues. May act as a translocator that mediates translocation of SPI-2 T3SS effector proteins from intraphagosomal bacterial cells into the host cells. SseB is required for correct localization of SseC and SseD on the bacterial cell surface. The protein is Secreted effector protein SseB (sseB) of Salmonella typhimurium (strain LT2 / SGSC1412 / ATCC 700720).